The following is a 208-amino-acid chain: LexA repressor (208 aa).

Positions Val29–Asn49 form a DNA-binding region, H-T-H motif. Active-site for autocatalytic cleavage activity residues include Ser129 and Lys167.

This sequence belongs to the peptidase S24 family. In terms of assembly, homodimer.

The enzyme catalyses Hydrolysis of Ala-|-Gly bond in repressor LexA.. In terms of biological role, represses a number of genes involved in the response to DNA damage (SOS response), including recA and lexA. In the presence of single-stranded DNA, RecA interacts with LexA causing an autocatalytic cleavage which disrupts the DNA-binding part of LexA, leading to derepression of the SOS regulon and eventually DNA repair. In Limosilactobacillus fermentum (strain NBRC 3956 / LMG 18251) (Lactobacillus fermentum), this protein is LexA repressor.